Reading from the N-terminus, the 320-residue chain is Lipoyl synthase (320 aa).

7 residues coordinate [4Fe-4S] cluster: Cys-67, Cys-72, Cys-78, Cys-93, Cys-97, Cys-100, and Ser-307. Residues 79–296 (FNHGTATFMI…REKAAEMGFE (218 aa)) form the Radical SAM core domain.

Belongs to the radical SAM superfamily. Lipoyl synthase family. It depends on [4Fe-4S] cluster as a cofactor.

The protein localises to the cytoplasm. It carries out the reaction [[Fe-S] cluster scaffold protein carrying a second [4Fe-4S](2+) cluster] + N(6)-octanoyl-L-lysyl-[protein] + 2 oxidized [2Fe-2S]-[ferredoxin] + 2 S-adenosyl-L-methionine + 4 H(+) = [[Fe-S] cluster scaffold protein] + N(6)-[(R)-dihydrolipoyl]-L-lysyl-[protein] + 4 Fe(3+) + 2 hydrogen sulfide + 2 5'-deoxyadenosine + 2 L-methionine + 2 reduced [2Fe-2S]-[ferredoxin]. Its pathway is protein modification; protein lipoylation via endogenous pathway; protein N(6)-(lipoyl)lysine from octanoyl-[acyl-carrier-protein]: step 2/2. Its function is as follows. Catalyzes the radical-mediated insertion of two sulfur atoms into the C-6 and C-8 positions of the octanoyl moiety bound to the lipoyl domains of lipoate-dependent enzymes, thereby converting the octanoylated domains into lipoylated derivatives. The chain is Lipoyl synthase from Actinobacillus succinogenes (strain ATCC 55618 / DSM 22257 / CCUG 43843 / 130Z).